A 249-amino-acid chain; its full sequence is Coproheme decarboxylase (249 aa).

Fe-coproporphyrin III contacts are provided by residues Arg-131, 145-149 (YPMDK), His-172, Gln-185, and Ser-223. Tyr-145 is a catalytic residue.

The protein belongs to the ChdC family. Type 1 subfamily. It depends on Fe-coproporphyrin III as a cofactor.

The catalysed reaction is Fe-coproporphyrin III + 2 H2O2 + 2 H(+) = heme b + 2 CO2 + 4 H2O. The enzyme catalyses Fe-coproporphyrin III + H2O2 + H(+) = harderoheme III + CO2 + 2 H2O. It carries out the reaction harderoheme III + H2O2 + H(+) = heme b + CO2 + 2 H2O. The protein operates within porphyrin-containing compound metabolism; protoheme biosynthesis. Its function is as follows. Involved in coproporphyrin-dependent heme b biosynthesis. Catalyzes the decarboxylation of Fe-coproporphyrin III (coproheme) to heme b (protoheme IX), the last step of the pathway. The reaction occurs in a stepwise manner with a three-propionate intermediate. This chain is Coproheme decarboxylase, found in Halalkalibacterium halodurans (strain ATCC BAA-125 / DSM 18197 / FERM 7344 / JCM 9153 / C-125) (Bacillus halodurans).